The primary structure comprises 101 residues: Urease subunit beta (101 aa).

The protein belongs to the urease beta subunit family. In terms of assembly, heterotrimer of UreA (gamma), UreB (beta) and UreC (alpha) subunits. Three heterotrimers associate to form the active enzyme.

Its subcellular location is the cytoplasm. The catalysed reaction is urea + 2 H2O + H(+) = hydrogencarbonate + 2 NH4(+). It participates in nitrogen metabolism; urea degradation; CO(2) and NH(3) from urea (urease route): step 1/1. The protein is Urease subunit beta of Bradyrhizobium sp. (strain ORS 278).